Consider the following 436-residue polypeptide: UDP-N-acetylglucosamine 1-carboxyvinyltransferase 1 (436 aa).

Phosphoenolpyruvate is bound at residue 22 to 23 (KN). Arg-93 contributes to the UDP-N-acetyl-alpha-D-glucosamine binding site. The Proton donor role is filled by Cys-117. A 2-(S-cysteinyl)pyruvic acid O-phosphothioketal modification is found at Cys-117. Residues 122 to 126 (RPIDQ), Asp-306, and Val-328 each bind UDP-N-acetyl-alpha-D-glucosamine.

It belongs to the EPSP synthase family. MurA subfamily.

The protein localises to the cytoplasm. It catalyses the reaction phosphoenolpyruvate + UDP-N-acetyl-alpha-D-glucosamine = UDP-N-acetyl-3-O-(1-carboxyvinyl)-alpha-D-glucosamine + phosphate. Its pathway is cell wall biogenesis; peptidoglycan biosynthesis. Its function is as follows. Cell wall formation. Adds enolpyruvyl to UDP-N-acetylglucosamine. Essential for cell growth. This Bacillus subtilis (strain 168) protein is UDP-N-acetylglucosamine 1-carboxyvinyltransferase 1.